Reading from the N-terminus, the 928-residue chain is Probable outer membrane protein pmp11 (928 aa).

Positions 1-24 (MKTSIPWVLVSSVLAFSCHLQSLA) are cleaved as a signal peptide. Residues 627 to 928 (GMEHKQGFWV…NVDVGTKLRF (302 aa)) form the Autotransporter domain.

This sequence belongs to the PMP outer membrane protein family.

Its subcellular location is the secreted. The protein localises to the cell wall. The protein resides in the cell outer membrane. This Chlamydia pneumoniae (Chlamydophila pneumoniae) protein is Probable outer membrane protein pmp11 (pmp11).